The following is a 63-amino-acid chain: MRIHYLLFTFLLVLLSPLAAFTQIINNPITCMTNGAICWGPCPTAFRQIGNCGHFKVRCCKIR.

A signal peptide spans 1-22; sequence MRIHYLLFTFLLVLLSPLAAFT. Gln-23 is modified (pyrrolidone carboxylic acid). Cystine bridges form between Cys-31–Cys-59, Cys-38–Cys-52, and Cys-42–Cys-60.

The protein belongs to the beta-defensin family. Tongue, esophagus and trachea.

It is found in the secreted. Exhibits antimicrobial activity against Gram-negative bacteria and Gram-positive bacteria. May act as a ligand for C-C chemokine receptor CCR6. Can bind to mouse (but not human) CCR6 and induce chemotactic activity of CCR6-expressing cells. The chain is Beta-defensin 4 (Defb4) from Mus musculus (Mouse).